The sequence spans 901 residues: Protein translocase subunit SecA (901 aa).

Residues Gln-87, 105 to 109 (GEGKT), and Asp-512 contribute to the ATP site. The interval 852-901 (AQMQQLSHQSDDEAAAEDLAAQTGERKVGRNDPCPCGSGKKYKQCHGRLS) is disordered. The Zn(2+) site is built by Cys-885, Cys-887, Cys-896, and His-897. Residues 891-901 (KKYKQCHGRLS) are compositionally biased toward basic residues.

This sequence belongs to the SecA family. Monomer and homodimer. Part of the essential Sec protein translocation apparatus which comprises SecA, SecYEG and auxiliary proteins SecDF-YajC and YidC. The cofactor is Zn(2+).

The protein localises to the cell inner membrane. It is found in the cytoplasm. The enzyme catalyses ATP + H2O + cellular proteinSide 1 = ADP + phosphate + cellular proteinSide 2.. In terms of biological role, part of the Sec protein translocase complex. Interacts with the SecYEG preprotein conducting channel. Has a central role in coupling the hydrolysis of ATP to the transfer of proteins into and across the cell membrane, serving both as a receptor for the preprotein-SecB complex and as an ATP-driven molecular motor driving the stepwise translocation of polypeptide chains across the membrane. The sequence is that of Protein translocase subunit SecA from Klebsiella pneumoniae (strain 342).